The chain runs to 110 residues: Nucleoid-associated protein RALTA_A1934 (110 aa).

Over residues 88–98 (TTQEKMGSMTS) the composition is skewed to polar residues. Residues 88–110 (TTQEKMGSMTSGLPLPPGFKLPF) are disordered. Pro residues predominate over residues 101-110 (PLPPGFKLPF).

Belongs to the YbaB/EbfC family. In terms of assembly, homodimer.

The protein resides in the cytoplasm. Its subcellular location is the nucleoid. Functionally, binds to DNA and alters its conformation. May be involved in regulation of gene expression, nucleoid organization and DNA protection. The polypeptide is Nucleoid-associated protein RALTA_A1934 (Cupriavidus taiwanensis (strain DSM 17343 / BCRC 17206 / CCUG 44338 / CIP 107171 / LMG 19424 / R1) (Ralstonia taiwanensis (strain LMG 19424))).